Reading from the N-terminus, the 230-residue chain is Large ribosomal subunit protein uL1 (230 aa).

It belongs to the universal ribosomal protein uL1 family. Part of the 50S ribosomal subunit.

In terms of biological role, binds directly to 23S rRNA. The L1 stalk is quite mobile in the ribosome, and is involved in E site tRNA release. Functionally, protein L1 is also a translational repressor protein, it controls the translation of the L11 operon by binding to its mRNA. The protein is Large ribosomal subunit protein uL1 of Lactobacillus johnsonii (strain CNCM I-12250 / La1 / NCC 533).